The following is a 259-amino-acid chain: Ubiquinone/menaquinone biosynthesis C-methyltransferase UbiE (259 aa).

S-adenosyl-L-methionine is bound by residues T82, D103, 131–132 (NA), and S148.

This sequence belongs to the class I-like SAM-binding methyltransferase superfamily. MenG/UbiE family.

The catalysed reaction is a 2-demethylmenaquinol + S-adenosyl-L-methionine = a menaquinol + S-adenosyl-L-homocysteine + H(+). It carries out the reaction a 2-methoxy-6-(all-trans-polyprenyl)benzene-1,4-diol + S-adenosyl-L-methionine = a 5-methoxy-2-methyl-3-(all-trans-polyprenyl)benzene-1,4-diol + S-adenosyl-L-homocysteine + H(+). The protein operates within quinol/quinone metabolism; menaquinone biosynthesis; menaquinol from 1,4-dihydroxy-2-naphthoate: step 2/2. Its pathway is cofactor biosynthesis; ubiquinone biosynthesis. Methyltransferase required for the conversion of demethylmenaquinol (DMKH2) to menaquinol (MKH2) and the conversion of 2-polyprenyl-6-methoxy-1,4-benzoquinol (DDMQH2) to 2-polyprenyl-3-methyl-6-methoxy-1,4-benzoquinol (DMQH2). The chain is Ubiquinone/menaquinone biosynthesis C-methyltransferase UbiE from Vibrio campbellii (strain ATCC BAA-1116).